The sequence spans 778 residues: Ribonucleoside-diphosphate reductase large subunit (778 aa).

Substrate is bound by residues Ser177, 192-193, Gly221, 419-423, and 613-617; these read SC, NLCIE, and PTATS. Cys193 and Cys439 are joined by a disulfide. Asn419 serves as the catalytic Proton acceptor. Catalysis depends on Cys421, which acts as the Cysteine radical intermediate. Residue Glu423 is the Proton acceptor of the active site.

The protein belongs to the ribonucleoside diphosphate reductase large chain family. Heterotetramer composed of a homodimer of the large subunit (R1) and a homodimer of the small subunit (R2). Larger multisubunit protein complex are also active, composed of (R1)n(R2)n.

The catalysed reaction is a 2'-deoxyribonucleoside 5'-diphosphate + [thioredoxin]-disulfide + H2O = a ribonucleoside 5'-diphosphate + [thioredoxin]-dithiol. Under complex allosteric control mediated by deoxynucleoside triphosphates and ATP binding. The type of nucleotide bound at the specificity site determines substrate preference. It seems probable that ATP makes the enzyme reduce CDP and UDP, dGTP favors ADP reduction and dTTP favors GDP reduction. Its function is as follows. Ribonucleoside-diphosphate reductase holoenzyme provides the precursors necessary for viral DNA synthesis. Allows virus growth in non-dividing cells. Catalyzes the biosynthesis of deoxyribonucleotides from the corresponding ribonucleotides. The sequence is that of Ribonucleoside-diphosphate reductase large subunit from Ornithodoros (relapsing fever ticks).